An 872-amino-acid chain; its full sequence is Leucine-rich repeat-containing protein 66 (872 aa).

The chain crosses the membrane as a helical span at residues 4-24 (FYVRVTILVTGLCFVETVTTP). N45 and N108 each carry an N-linked (GlcNAc...) asparagine glycan. LRR repeat units lie at residues 142 to 164 (RLQV…WKLK), 165 to 186 (SLRS…DFHG), 189 to 210 (QLES…AFKG), 213 to 234 (KLQV…VTIA), and 239 to 259 (HLEL…VNFQ). The tract at residues 339–363 (LRGMWPQSPVELRDSQDEQVTDRKD) is disordered. Basic and acidic residues predominate over residues 349–363 (ELRDSQDEQVTDRKD). Residues 371 to 391 (LAICLSVFITFVVAFCLGAFA) form a helical membrane-spanning segment. Over residues 467–483 (QMLGSNGTDPGHQQSPE) the composition is skewed to polar residues. 4 disordered regions span residues 467 to 501 (QMLG…VLPS), 560 to 579 (GTFP…SQPR), 695 to 761 (NYES…SQRI), and 776 to 872 (LISG…SKHW). N-linked (GlcNAc...) asparagine glycosylation is present at N472. Positions 484-493 (QLKDSNESRS) are enriched in basic and acidic residues. The residue at position 718 (S718) is a Phosphoserine. Composition is skewed to polar residues over residues 725-736 (SVENDGTSQPLP), 746-760 (SVTS…TSQR), and 785-805 (CETN…STWP). S752 is subject to Phosphoserine. Positions 831 to 841 (VDWHYSLRDLE) are enriched in basic and acidic residues.

It is found in the membrane. The chain is Leucine-rich repeat-containing protein 66 (Lrrc66) from Mus musculus (Mouse).